The chain runs to 91 residues: Small ribosomal subunit protein bS16 (91 aa).

Belongs to the bacterial ribosomal protein bS16 family.

The chain is Small ribosomal subunit protein bS16 from Ruthia magnifica subsp. Calyptogena magnifica.